The primary structure comprises 36 residues: Amanexitide proprotein 2 (36 aa).

Positions 1 to 10 (MSDINATRLP) are excised as a propeptide. Residues 11-19 (VFSLPVFFP) constitute a cross-link (cyclopeptide (Val-Pro)). Positions 20-36 (FVSDDIQAVLTRGESLC) are excised as a propeptide.

This sequence belongs to the MSDIN fungal toxin family. Post-translationally, processed by the macrocyclase-peptidase enzyme POPB to yield a toxic cyclic nonapeptide. POPB first removes 10 residues from the N-terminus. Conformational trapping of the remaining peptide forces the enzyme to release this intermediate rather than proceed to macrocyclization. The enzyme rebinds the remaining peptide in a different conformation and catalyzes macrocyclization of the N-terminal 9 residues. Expressed in basidiocarps.

Cyclic nonapeptide that belongs to the MSDIN-like toxin family responsible for a large number of food poisoning cases and deaths. The protein is Amanexitide proprotein 2 of Amanita exitialis (Guangzhou destroying angel).